Here is a 257-residue protein sequence, read N- to C-terminus: Exosome complex component Rrp4 (257 aa).

One can recognise an S1 motif domain in the interval 65–137; the sequence is GDNVLGKIVD…EVNQIDLTTK (73 aa). Positions 147–206 constitute a KH domain; sequence RGGQLVTITPSKVPRLIGKGGSMINMIKTLTGTRIIVGQNGWVWVSGKNDELERLAIEAI.

The protein belongs to the RRP4 family. Component of the archaeal exosome complex. Forms a trimer of Rrp4 and/or Csl4 subunits. The trimer associates with a hexameric ring-like arrangement composed of 3 Rrp41-Rrp42 heterodimers.

The protein localises to the cytoplasm. In terms of biological role, non-catalytic component of the exosome, which is a complex involved in RNA degradation. Increases the RNA binding and the efficiency of RNA degradation. Confers strong poly(A) specificity to the exosome. This chain is Exosome complex component Rrp4, found in Thermococcus kodakarensis (strain ATCC BAA-918 / JCM 12380 / KOD1) (Pyrococcus kodakaraensis (strain KOD1)).